A 118-amino-acid polypeptide reads, in one-letter code: NADH-ubiquinone oxidoreductase chain 3 (118 aa).

3 helical membrane passes run 5–25 (YIYI…LIFL), 62–82 (LIAI…PWSI), and 87–107 (GSFF…VGFI).

It belongs to the complex I subunit 3 family.

The protein resides in the mitochondrion membrane. It carries out the reaction a ubiquinone + NADH + 5 H(+)(in) = a ubiquinol + NAD(+) + 4 H(+)(out). Core subunit of the mitochondrial membrane respiratory chain NADH dehydrogenase (Complex I) that is believed to belong to the minimal assembly required for catalysis. Complex I functions in the transfer of electrons from NADH to the respiratory chain. The immediate electron acceptor for the enzyme is believed to be ubiquinone. The polypeptide is NADH-ubiquinone oxidoreductase chain 3 (ND3) (Acanthamoeba castellanii (Amoeba)).